Reading from the N-terminus, the 195-residue chain is Calcium channel flower (195 aa).

The next 3 helical transmembrane spans lie at 34-54 (LLGI…VISI), 66-88 (IIQM…VCIE), and 117-137 (IFMC…ATGV).

Belongs to the calcium channel flower family. Homomultimer. Associates with the dally/ magu complex.

The protein localises to the cell membrane. Its subcellular location is the cytoplasmic vesicle. It localises to the secretory vesicle. The protein resides in the synaptic vesicle membrane. It is found in the presynaptic cell membrane. The protein localises to the endosome. With respect to regulation, channel activity is inhibited by La(3+), which reduces Ca(2+) influx and thus inhibits it's function in promoting activity-dependent bulk endocytosis (ADBE) in response to high stimuli. In terms of biological role, transmembrane protein which mediates synaptic endocytosis, fitness-based cell culling, neuronal culling, morphogen gradient scaling, and calcium transport. Regulates synaptic endocytosis and hence couples exo- with endocytosis. Controls two major modes of synaptic vesicle (SV) endocytosis in the synaptic boutons of neuromuscular junctions (NMJs); Ca(2+) channel-independent Clathrin-mediated endocytosis (CME) in response to mild stimulation, and Ca(2+) channel-dependent activity-dependent bulk endocytosis (ADBE) in response to strong stimulation. Functions in ADBE and subsequent SV reformation from bulk endosomes by initiating Ca(2+) channel-dependent phosphatidylinositol 4,5-bisphosphate (PtdIns(4,5)P2) compartmentalization in synaptic boutons. There it acts at the periactive zone to provide the low Ca(2+) levels required to initiate Calcineurin activation and upregulate PtdIns(4,5)P2. Conversely PtdIns(4,5)P2 enhances fwe Ca(2+) channel-activity, establishing a positive feedback loop that induces PtdIns(4,5)P2 microdomain at the periactive zone. These microdomains trigger bulk membrane invagination (i.e. ADBE) by triggering actin polymerization while also promoting localization of fwe to bulk endosomes, thereby removing the ADBE trigger to reduce endocytosis and prevent excess membrane uptake. PtdIns(4,5)P2 then promotes SV reformation from the bulk endosomes, to coordinate ADBE and subsequent SV reformation. Different combinations of the flower isoforms at the cell membrane are also required for the identification and elimination of suboptimal or supernumerary cells during development, regeneration, and adulthood. Required for the recognition and elimination of unfit cells in the developing wing during cell competition. In the developing pupal retina, mediates the elimination of unwanted postmitotic neurons, including supernumerary photoreceptor neurons that form at the periphery of the retina and are contained within incomplete ommatidia units. Also required for efficient elimination and replacement of old neurons by newly generated neurons during regeneration in the adult brain following mechanical injury. Downstream of the flower fitness fingerprints, cells identified as unwanted or unfit are eliminated via apoptosis through the expression of ahuizotl (azot). However, the cells marked for elimination by the flower isoforms only undergo apoptosis if additional thresholds are met; (1) their neighboring fit/healthy cells express different levels of the fwe isoforms, and (2) the levels of the protective signal SPARC expressed by the loser or unwanted cells are unable to inhibit caspase activation. These additional thresholds for flower-mediated apoptosis, allows useful cells to recover from transient and limited stress before they are unnecessarily eliminated. Functions with dally and magu in a mechanism of scaling, which utilises apoptosis to ensure that the dpp morphogen gradient, which mediates organ growth, remains proportional to the size of the growing wing. In this mechanism, fwe represses dally- and Magu-dependent activity in expanding the gradient, and dally/Magu inhibits fwe-dependent apoptosis to keep cell death rate low. When the levels of these different proteins are optimally regulated the gradient correctly scales with organ growth but when this fails, fwe-mediated apoptosis is activated to trim the developing tissue to match the correct size of the gradient. The chain is Calcium channel flower from Drosophila ananassae (Fruit fly).